The chain runs to 67 residues: Large ribosomal subunit protein uL29 (67 aa).

It belongs to the universal ribosomal protein uL29 family.

This is Large ribosomal subunit protein uL29 from Sulfurihydrogenibium sp. (strain YO3AOP1).